A 113-amino-acid polypeptide reads, in one-letter code: T cell receptor alpha variable 5 (113 aa).

An N-terminal signal peptide occupies residues Met-1–Gly-22. The region spanning Glu-23 to Ser-113 is the Ig-like domain. Residue Asn-42 is glycosylated (N-linked (GlcNAc...) asparagine). An intrachain disulfide couples Cys-43 to Cys-110.

Alpha-beta TR is a heterodimer composed of an alpha and beta chain; disulfide-linked. The alpha-beta TR is associated with the transmembrane signaling CD3 coreceptor proteins to form the TR-CD3 (TcR or TCR). The assembly of alpha-beta TR heterodimers with CD3 occurs in the endoplasmic reticulum where a single alpha-beta TR heterodimer associates with one CD3D-CD3E heterodimer, one CD3G-CD3E heterodimer and one CD247 homodimer forming a stable octameric structure. CD3D-CD3E and CD3G-CD3E heterodimers preferentially associate with TR alpha and TR beta chains, respectively. The association of the CD247 homodimer is the last step of TcR assembly in the endoplasmic reticulum and is required for transport to the cell surface.

It localises to the cell membrane. Functionally, v region of the variable domain of T cell receptor (TR) alpha chain that participates in the antigen recognition. Alpha-beta T cell receptors are antigen specific receptors which are essential to the immune response and are present on the cell surface of T lymphocytes. Recognize peptide-major histocompatibility (MH) (pMH) complexes that are displayed by antigen presenting cells (APC), a prerequisite for efficient T cell adaptive immunity against pathogens. Binding of alpha-beta TR to pMH complex initiates TR-CD3 clustering on the cell surface and intracellular activation of LCK that phosphorylates the ITAM motifs of CD3G, CD3D, CD3E and CD247 enabling the recruitment of ZAP70. In turn ZAP70 phosphorylates LAT, which recruits numerous signaling molecules to form the LAT signalosome. The LAT signalosome propagates signal branching to three major signaling pathways, the calcium, the mitogen-activated protein kinase (MAPK) kinase and the nuclear factor NF-kappa-B (NF-kB) pathways, leading to the mobilization of transcription factors that are critical for gene expression and essential for T cell growth and differentiation. The T cell repertoire is generated in the thymus, by V-(D)-J rearrangement. This repertoire is then shaped by intrathymic selection events to generate a peripheral T cell pool of self-MH restricted, non-autoaggressive T cells. Post-thymic interaction of alpha-beta TR with the pMH complexes shapes TR structural and functional avidity. The sequence is that of T cell receptor alpha variable 5 from Homo sapiens (Human).